The following is a 396-amino-acid chain: Elongation factor Tu (396 aa).

The region spanning 10–206 (KPHCNIGTIG…AVDEFIPQPT (197 aa)) is the tr-type G domain. A G1 region spans residues 19–26 (GHVDHGKT). 19 to 26 (GHVDHGKT) contacts GTP. Threonine 26 serves as a coordination point for Mg(2+). The interval 60-64 (GITIS) is G2. The G3 stretch occupies residues 81–84 (DCPG). GTP contacts are provided by residues 81–85 (DCPGH) and 136–139 (NKVD). The G4 stretch occupies residues 136-139 (NKVD). Residues 174 to 176 (SAL) form a G5 region.

It belongs to the TRAFAC class translation factor GTPase superfamily. Classic translation factor GTPase family. EF-Tu/EF-1A subfamily. As to quaternary structure, monomer.

It localises to the cytoplasm. It carries out the reaction GTP + H2O = GDP + phosphate + H(+). Functionally, GTP hydrolase that promotes the GTP-dependent binding of aminoacyl-tRNA to the A-site of ribosomes during protein biosynthesis. This chain is Elongation factor Tu, found in Pelagibacter ubique (strain HTCC1062).